The primary structure comprises 755 residues: E3 ubiquitin-protein ligase TRIM56 (755 aa).

An RING-type zinc finger spans residues 21–60 (CKICLEQLRAPKTLPCLHTYCQDCLAQLADGGRVRCPECR). B box-type zinc fingers lie at residues 98–149 (KPAC…VVDL) and 164–205 (RQAA…CLPL). Positions 169, 172, 192, and 197 each coordinate Zn(2+). The stretch at 216-314 (LEGLLAGVDN…AAAFARRVLS (99 aa)) forms a coiled coil. The interval 371 to 484 (EEQQPQKDGG…SPALGPNLDG (114 aa)) is disordered. Residues 392 to 404 (SQSRREDEPKTER) are compositionally biased toward basic and acidic residues. Thr418 and Thr442 each carry phosphothreonine. A compositionally biased stretch (basic and acidic residues) spans 419–447 (PKEEKAQTTREEGAQTLEEDRAQTPHEDG). The segment covering 453–469 (RGGRPNKKKKFKGRLKS) has biased composition (basic residues). At Ser475 the chain carries Phosphoserine.

Belongs to the TRIM/RBCC family. As to quaternary structure, homooligomer. Interacts with STING1. Interacts with TICAM1. Post-translationally, (Microbial infection) Preferentially ubiquitinated with 'Lys-48' and 'Lys-11'-linked ubiquitin chains by Salmonella effector SopA leading to proteasomal targeting and degradation. In terms of processing, autoubiquitinated. As to expression, widely expressed (at protein level).

It localises to the cytoplasm. It catalyses the reaction S-ubiquitinyl-[E2 ubiquitin-conjugating enzyme]-L-cysteine + [acceptor protein]-L-lysine = [E2 ubiquitin-conjugating enzyme]-L-cysteine + N(6)-ubiquitinyl-[acceptor protein]-L-lysine.. Its pathway is protein modification; protein ubiquitination. Functionally, E3 ubiquitin-protein ligase that plays a key role in innate antiviral immunity by mediating ubiquitination of CGAS and STING1. In response to pathogen- and host-derived double-stranded DNA (dsDNA), targets STING1 to 'Lys-63'-linked ubiquitination, thereby promoting its homodimerization, a step required for the production of type I interferon IFN-beta. Also mediate monoubiquitination of CGAS, thereby promoting CGAS oligomerization and subsequent activation. Promotes also TNFalpha-induced NF-kappa-B signaling by mediating 'Lys-63'-linked ubiquitination TAK1, leading to enhanced interaction between TAK1 and CHUK/IKKalpha. Independently of its E3 ubiquitin ligase activity, positive regulator of TLR3 signaling. Potentiates extracellular double stranded RNA (dsRNA)-induced expression of IFNB1 and interferon-stimulated genes ISG15, IFIT1/ISG56, CXCL10, OASL and CCL5/RANTES. Promotes establishment of an antiviral state by TLR3 ligand and TLR3-mediated chemokine induction following infection by hepatitis C virus. Acts as a restriction factor of Zika virus through direct interaction with the viral RNA via its C-terminal region. This chain is E3 ubiquitin-protein ligase TRIM56, found in Homo sapiens (Human).